The sequence spans 149 residues: D-aminoacyl-tRNA deacylase (149 aa).

Residues 137-138 (GP) carry the Gly-cisPro motif, important for rejection of L-amino acids motif.

Belongs to the DTD family. Homodimer.

The protein localises to the cytoplasm. The enzyme catalyses glycyl-tRNA(Ala) + H2O = tRNA(Ala) + glycine + H(+). It carries out the reaction a D-aminoacyl-tRNA + H2O = a tRNA + a D-alpha-amino acid + H(+). In terms of biological role, an aminoacyl-tRNA editing enzyme that deacylates mischarged D-aminoacyl-tRNAs. Also deacylates mischarged glycyl-tRNA(Ala), protecting cells against glycine mischarging by AlaRS. Acts via tRNA-based rather than protein-based catalysis; rejects L-amino acids rather than detecting D-amino acids in the active site. By recycling D-aminoacyl-tRNA to D-amino acids and free tRNA molecules, this enzyme counteracts the toxicity associated with the formation of D-aminoacyl-tRNA entities in vivo and helps enforce protein L-homochirality. This is D-aminoacyl-tRNA deacylase from Clostridium perfringens (strain ATCC 13124 / DSM 756 / JCM 1290 / NCIMB 6125 / NCTC 8237 / Type A).